We begin with the raw amino-acid sequence, 356 residues long: MGFQILTINPGSTSTKVAWFDDDKLVWKDSVEHDAVTLSQFPSIAAQFELRASEVEKAVEKHGSDLNTLDAVVGRGGLLRPISSGVYSVNETMLKELIDARYGEHASNLGAPIAHAIASKVGCPAFIVDPVVVDEMDDISRLSGWPELPRKSIFHALNQKAVARRVARDFFSVPYEQLNLIVAHLGGGISIGAHKKGRVVDVNNALGGEGPMSPERAGTLPIMKLADYLYEHKPDRKEFSKKLVGKGGWVAHLGTNSGKDLEERVKNGDEHAILILKATGYQISKWIAQMAVALAGEVDGIIITGGLAYIPELVDFIQERVLWIAPVFVVPGEDEMLALAEGALRVLRGQEEAKTY.

Belongs to the acetokinase family.

The protein resides in the cytoplasm. It catalyses the reaction butanoate + ATP = butanoyl phosphate + ADP. The polypeptide is Probable butyrate kinase (Coprothermobacter proteolyticus (strain ATCC 35245 / DSM 5265 / OCM 4 / BT)).